A 152-amino-acid polypeptide reads, in one-letter code: MGDSIKVLSENRQARFQYEILETYECGLVLLGTEVKSIRAGKVNLRDGFARIRNGEAWLMNVHISPHESTNPSYNHDPLRDRKLLLHKQEIRKLVGKVEQKGLTLVPLKLYLKNGRVKVSLGLARGKKLHDKRQDLKQRQDKREMERAMKQR.

The interval His130 to Arg152 is disordered. Basic and acidic residues predominate over residues Lys132–Arg152.

It belongs to the SmpB family.

The protein resides in the cytoplasm. Required for rescue of stalled ribosomes mediated by trans-translation. Binds to transfer-messenger RNA (tmRNA), required for stable association of tmRNA with ribosomes. tmRNA and SmpB together mimic tRNA shape, replacing the anticodon stem-loop with SmpB. tmRNA is encoded by the ssrA gene; the 2 termini fold to resemble tRNA(Ala) and it encodes a 'tag peptide', a short internal open reading frame. During trans-translation Ala-aminoacylated tmRNA acts like a tRNA, entering the A-site of stalled ribosomes, displacing the stalled mRNA. The ribosome then switches to translate the ORF on the tmRNA; the nascent peptide is terminated with the 'tag peptide' encoded by the tmRNA and targeted for degradation. The ribosome is freed to recommence translation, which seems to be the essential function of trans-translation. This chain is SsrA-binding protein, found in Thermosynechococcus vestitus (strain NIES-2133 / IAM M-273 / BP-1).